We begin with the raw amino-acid sequence, 147 residues long: Cyanate hydratase (147 aa).

Catalysis depends on residues Arg88, Glu91, and Ser114.

The protein belongs to the cyanase family.

It catalyses the reaction cyanate + hydrogencarbonate + 3 H(+) = NH4(+) + 2 CO2. Catalyzes the reaction of cyanate with bicarbonate to produce ammonia and carbon dioxide. The sequence is that of Cyanate hydratase from Polynucleobacter asymbioticus (strain DSM 18221 / CIP 109841 / QLW-P1DMWA-1) (Polynucleobacter necessarius subsp. asymbioticus).